We begin with the raw amino-acid sequence, 114 residues long: Iron-sulfur cluster insertion protein ErpA (114 aa).

The iron-sulfur cluster site is built by C42, C106, and C108.

Belongs to the HesB/IscA family. As to quaternary structure, homodimer. The cofactor is iron-sulfur cluster.

Required for insertion of 4Fe-4S clusters for at least IspG. The chain is Iron-sulfur cluster insertion protein ErpA from Proteus mirabilis (strain HI4320).